The chain runs to 418 residues: Probable serine hydroxymethyltransferase (418 aa).

(6S)-5,6,7,8-tetrahydrofolate is bound by residues leucine 118 and 122 to 124 (GHL). N6-(pyridoxal phosphate)lysine is present on lysine 226. Position 351–353 (351–353 (SPF)) interacts with (6S)-5,6,7,8-tetrahydrofolate.

The protein belongs to the SHMT family. As to quaternary structure, homodimer. Pyridoxal 5'-phosphate is required as a cofactor.

It is found in the cytoplasm. The enzyme catalyses (6R)-5,10-methylene-5,6,7,8-tetrahydrofolate + glycine + H2O = (6S)-5,6,7,8-tetrahydrofolate + L-serine. It functions in the pathway one-carbon metabolism; tetrahydrofolate interconversion. In terms of biological role, catalyzes the reversible interconversion of serine and glycine with tetrahydrofolate (THF) serving as the one-carbon carrier. This reaction serves as the major source of one-carbon groups required for the biosynthesis of purines, thymidylate, methionine, and other important biomolecules. The chain is Probable serine hydroxymethyltransferase from Mesomycoplasma hyopneumoniae (strain 232) (Mycoplasma hyopneumoniae).